The following is a 1035-amino-acid chain: NHS-like protein 3 (1035 aa).

V2 carries the N-myristoyl glycine lipid modification. Disordered regions lie at residues 23–44 (KAEN…AVDE), 76–105 (QEKQ…DEDN), and 133–162 (IQRK…RRST). The segment covering 76-90 (QEKQKLNKGGWDHGD) has biased composition (basic and acidic residues). S93, S138, S145, and S161 each carry phosphoserine. T162 is modified (phosphothreonine). S215 carries the phosphoserine modification. R320 bears the Asymmetric dimethylarginine mark. Residues S322, S327, S330, S338, S339, S341, and S342 each carry the phosphoserine modification. Disordered regions lie at residues 332–869 (RSLG…APSS) and 885–1035 (SEGL…KELA). Residues 338-365 (SSVSSPQPRSRHPSSSSDTWSHSQSSDT) show a composition bias toward low complexity. Polar residues predominate over residues 366–388 (IVSDGSTLSSKGGSEGQPESSTA). Phosphoserine is present on residues S400, S404, and S409. Residues 411-429 (AEASDTLSIRSSGQLSGRS) are compositionally biased toward polar residues. Positions 431–449 (SLRKLKRPPPPPRRTHSLH) are enriched in basic residues. Low complexity predominate over residues 517–532 (RTLSPSSGYSSQSGTP). At T531 the chain carries Phosphothreonine. The span at 543-552 (PASPGKAQPP) shows a compositional bias: pro residues. The residue at position 545 (S545) is a Phosphoserine. Positions 562 to 589 (SPGASVSSSLTSLCSSSSDPAPSDRSGP) are enriched in low complexity. The residue at position 593 (T593) is a Phosphothreonine. Pro residues predominate over residues 602–624 (PPHPKVPAPFSPPPSKPRSPNPA). Residue S612 is modified to Phosphoserine. Composition is skewed to low complexity over residues 625-645 (APAL…DASP) and 652-662 (QTTLTPLQESP). A phosphoserine mark is found at S669 and S673. 2 stretches are compositionally biased toward pro residues: residues 669 to 685 (SPPP…PPPT) and 709 to 718 (NWPPPPPPAP). Low complexity predominate over residues 737-765 (SVASPEPAGPSGSPELVSSPAASSSSATA). Positions 771 to 784 (PGSPDPPPAPPAPA) are enriched in pro residues. A compositionally biased stretch (low complexity) spans 838-848 (GAPTPALGPSA). Residues S858, S862, and S868 each carry the phosphoserine modification. The segment covering 894-906 (NGPPEAEPRPPQS) has biased composition (pro residues). 4 positions are modified to phosphoserine: S929, S959, S971, and S979. A compositionally biased stretch (pro residues) spans 961–980 (KAPPPVARKPSVGVPPPASP). A compositionally biased stretch (basic and acidic residues) spans 999–1008 (TQDRTKRELA).

Expressed in lung.

Able to directly activate the TNF-NFkappaB signaling pathway. The polypeptide is NHS-like protein 3 (Homo sapiens (Human)).